Consider the following 33-residue polypeptide: Photosystem II reaction center protein Psb30 (33 aa).

Residues 5–25 (VIAQLTVLSLIVLSGPLVIIL) traverse the membrane as a helical segment.

Belongs to the Psb30/Ycf12 family. In terms of assembly, PSII is composed of 1 copy each of membrane proteins PsbA, PsbB, PsbC, PsbD, PsbE, PsbF, PsbH, PsbI, PsbJ, PsbK, PsbL, PsbM, PsbT, PsbX, PsbY, PsbZ, Psb30/Ycf12, peripheral proteins of the oxygen-evolving complex and a large number of cofactors. It forms dimeric complexes.

The protein resides in the plastid. The protein localises to the chloroplast thylakoid membrane. Functionally, a core subunit of photosystem II (PSII), probably helps stabilize the reaction center. The protein is Photosystem II reaction center protein Psb30 of Chlorokybus atmophyticus (Soil alga).